The following is a 363-amino-acid chain: Des-methyl DIF-1 methyltransferase A (363 aa).

Residues G195, D221, D250, L251, and K266 each contribute to the S-adenosyl-L-methionine site. The active-site Proton acceptor is the H270.

This sequence belongs to the class I-like SAM-binding methyltransferase superfamily. Cation-independent O-methyltransferase family. COMT subfamily.

The enzyme catalyses (3,5-dichloro-2,4,6-trihydroxyphenyl)hexan-1-one + S-adenosyl-L-methionine = 1-(3,5-dichloro-2,6-dihydroxy-4-methoxyphenyl)hexan-1-one + S-adenosyl-L-homocysteine + H(+). O-methyltransferase; part of the gene cluster that mediates the biosynthesis of DIF-1 (Differentiation Inducing Factor-1), a signal molecule involved in the differentiation of pstO (prestalk-O) cells. The three-step process begins with the formation of (2,4,6-trihydroxyphenyl)-1-hexan-1-one (THPH) by the polyketide synthase StlB. THPH is then dichlorinated by the flavin-dependent halogenase ChlA. The last step of DIF-1 biosynthesis is the O-methylation of dichloro-THPH (or des-methyl-DIF-1) by the methyltransferase DmtA to yield DIF-1. This is Des-methyl DIF-1 methyltransferase A from Dictyostelium discoideum (Social amoeba).